The primary structure comprises 170 residues: RNA pyrophosphohydrolase (170 aa).

In terms of domain architecture, Nudix hydrolase spans 8–151; that stretch reads PYRPNVGIAL…KKALYAELIP (144 aa). The Nudix box motif lies at 42-63; it reads GGIDEGETPQVAALREMGEEIG.

Belongs to the Nudix hydrolase family. RppH subfamily. It depends on a divalent metal cation as a cofactor.

Its function is as follows. Accelerates the degradation of transcripts by removing pyrophosphate from the 5'-end of triphosphorylated RNA, leading to a more labile monophosphorylated state that can stimulate subsequent ribonuclease cleavage. The chain is RNA pyrophosphohydrolase from Gluconobacter oxydans (strain 621H) (Gluconobacter suboxydans).